A 702-amino-acid chain; its full sequence is Penicillin-binding protein activator LpoA (702 aa).

The signal sequence occupies residues 1–26 (MVPSTFLRSKPARCLPVLLATLIFAG). C27 carries N-palmitoyl cysteine lipidation. A lipid anchor (S-diacylglycerol cysteine) is attached at C27. A disordered region spans residues 327–378 (GSRADPVQAPTQDQAAPAAEPAAQAPATSTTPQTTASPATQPVTAPAAQPQP). Residues 330–378 (ADPVQAPTQDQAAPAAEPAAQAPATSTTPQTTASPATQPVTAPAAQPQP) are compositionally biased toward low complexity.

Belongs to the LpoA family. As to quaternary structure, interacts with PBP1a.

It localises to the cell outer membrane. Functionally, regulator of peptidoglycan synthesis that is essential for the function of penicillin-binding protein 1A (PBP1a). In Klebsiella pneumoniae subsp. pneumoniae (strain ATCC 700721 / MGH 78578), this protein is Penicillin-binding protein activator LpoA.